The following is a 113-amino-acid chain: Large ribosomal subunit protein uL22 (113 aa).

This sequence belongs to the universal ribosomal protein uL22 family. Part of the 50S ribosomal subunit.

Functionally, this protein binds specifically to 23S rRNA; its binding is stimulated by other ribosomal proteins, e.g. L4, L17, and L20. It is important during the early stages of 50S assembly. It makes multiple contacts with different domains of the 23S rRNA in the assembled 50S subunit and ribosome. Its function is as follows. The globular domain of the protein is located near the polypeptide exit tunnel on the outside of the subunit, while an extended beta-hairpin is found that lines the wall of the exit tunnel in the center of the 70S ribosome. The protein is Large ribosomal subunit protein uL22 of Geobacillus kaustophilus (strain HTA426).